The sequence spans 1057 residues: Adenylate-forming reductase stbB (1057 aa).

Positions 21–378 (STKRQPGAVC…FRLRTDMNFE (358 aa)) are adenylation (A) domain. AMP-binding positions include histidine 251, 344–345 (NF), threonine 349, and 423–426 (AVGR). In terms of domain architecture, Carrier spans 564 to 651 (ETLEEDIKAL…QMAAAIKNPS (88 aa)). Serine 600 is modified (O-(pantetheine 4'-phosphoryl)serine). Residues 693-1025 (IVVVTGSSGS…SGAVILGTDV (333 aa)) are reductase (R) domain. NADP(+) contacts are provided by residues 700–703 (SGSL), 783–785 (AAW), tyrosine 858, and lysine 862.

This sequence belongs to the adenylate-forming reductase family.

It carries out the reaction ilicicolinate B + AH2 + ATP = ilicicolin B + A + AMP + diphosphate. The protein operates within secondary metabolite biosynthesis; terpenoid biosynthesis. Nonribosomal peptide synthase-like protein; part of the cluster that mediates the biosynthesis of LL-Z1272-beta, also known as ilicicolin B, a prenylated aryl-aldehyde produced by several fungi and that serves as a key pathway intermediate for many fungal meroterpenoids. The first step in the pathway is performed by the non-reducing polyketide synthase stbA that produces orsellinic acid by condensing acetyl-CoA with 3 malonyl-CoA units. The prenyltransferase stbC then prenylates orsenilic acid into grifolic acid. Finally, grifolic acid is reduced to ilicicolin B by the NRPS-like protein stbB. This chain is Adenylate-forming reductase stbB, found in Stachybotrys bisbyi (Hyalostachybotrys bisbyi).